A 606-amino-acid polypeptide reads, in one-letter code: Anthranilate synthase alpha subunit 2, chloroplastic (606 aa).

A chloroplast-targeting transit peptide spans 1–49 (MESIAAATFTPSRLAARPATPAAAAAPVRARAAVAAGGRRRTSRRGGVR).

The protein belongs to the anthranilate synthase component I family. Heterotetramer consisting of two non-identical subunits: a beta subunit and a large alpha subunit.

It is found in the plastid. The protein resides in the chloroplast. The enzyme catalyses chorismate + L-glutamine = anthranilate + pyruvate + L-glutamate + H(+). The protein operates within amino-acid biosynthesis; L-tryptophan biosynthesis; L-tryptophan from chorismate: step 1/5. Feedback inhibition by tryptophan. In terms of biological role, part of a heterotetrameric complex that catalyzes the two-step biosynthesis of anthranilate, an intermediate in the biosynthesis of L-tryptophan. In the first step, the glutamine-binding beta subunit of anthranilate synthase (AS) provides the glutamine amidotransferase activity which generates ammonia as a substrate that, along with chorismate, is used in the second step, catalyzed by the large alpha subunit of AS to produce anthranilate. This Oryza sativa subsp. japonica (Rice) protein is Anthranilate synthase alpha subunit 2, chloroplastic.